A 568-amino-acid chain; its full sequence is Sesquiterpene synthase 14 (568 aa).

Asp319, Asp323, Asp463, and Glu471 together coordinate Mg(2+). Residues Asp319–Asp323 carry the DDXXD motif motif.

Belongs to the terpene synthase family. Tpsa subfamily. Mg(2+) is required as a cofactor. Mn(2+) serves as cofactor. As to expression, mostly expressed in roots, to a lower extent in flowers and, at low levels, in fruits.

It catalyses the reaction (2Z,6Z)-farnesyl diphosphate = (E)-alpha-bisabolene + diphosphate. The catalysed reaction is (2Z,6Z)-farnesyl diphosphate = beta-bisabolene + diphosphate. The enzyme catalyses (2E,6E)-farnesyl diphosphate = beta-bisabolene + diphosphate. It carries out the reaction (2E,6E)-farnesyl diphosphate = (Z)-gamma-bisabolene + diphosphate. It catalyses the reaction (2E,6E)-farnesyl diphosphate = (E)-gamma-bisabolene + diphosphate. The catalysed reaction is (2Z,6Z)-farnesyl diphosphate = (E)-gamma-bisabolene + diphosphate. It functions in the pathway secondary metabolite biosynthesis; terpenoid biosynthesis. In terms of biological role, sesquiterpene synthase involved in the biosynthesis of volatile compounds. Mediates the conversion of (2E,6E)-farnesyl diphosphate ((EE)-FPP) into beta-bisabolene, and of (2Z,6Z)-farnesyl diphosphate ((ZZ)-FPP) into alpha-bisabolene, but also smaller amounts of (Z)-gamma-bisabolene, (E)-gamma-bisabolene and nerolidol. The chain is Sesquiterpene synthase 14 from Solanum lycopersicum (Tomato).